Reading from the N-terminus, the 146-residue chain is Large ribosomal subunit protein bL19 (146 aa).

This sequence belongs to the bacterial ribosomal protein bL19 family.

In terms of biological role, this protein is located at the 30S-50S ribosomal subunit interface and may play a role in the structure and function of the aminoacyl-tRNA binding site. The chain is Large ribosomal subunit protein bL19 from Bartonella henselae (strain ATCC 49882 / DSM 28221 / CCUG 30454 / Houston 1) (Rochalimaea henselae).